The sequence spans 110 residues: Inner membrane protein YgiZ (110 aa).

The Cytoplasmic portion of the chain corresponds to 1–8 (MLKQKIKT). The helical transmembrane segment at 9–29 (IFEALLYIMLTYWLIDSFFAF) threads the bilayer. Topologically, residues 30 to 53 (NKYDWMLESGGNICSIPSVSGEDR) are periplasmic. The helical transmembrane segment at 54–74 (ILQAMIAAFFLLTPLIILILR) threads the bilayer. Topologically, residues 75–83 (KLFMREMFE) are cytoplasmic. A helical membrane pass occupies residues 84–104 (FWVYVFSLGICLVCGWWLFWG). At 105-110 (RFIFCY) the chain is on the periplasmic side.

The protein localises to the cell inner membrane. In Escherichia coli (strain K12), this protein is Inner membrane protein YgiZ (ygiZ).